Reading from the N-terminus, the 353-residue chain is Photosystem II protein D1 (353 aa).

Position 2 is an N-acetylthreonine (T2). T2 carries the post-translational modification Phosphothreonine. Transmembrane regions (helical) follow at residues 29-46 (YIGWFGVLMIPTLLTATS), 118-133 (HFLLGVACYMGREWEL), and 142-156 (WIAVAYSAPVAAATA). Position 118 (H118) interacts with chlorophyll a. Y126 contacts pheophytin a. The [CaMn4O5] cluster site is built by D170 and E189. The helical transmembrane segment at 197-218 (FHMLGVAGVFGGSLFSAMHGSL) threads the bilayer. H198 lines the chlorophyll a pocket. A quinone contacts are provided by residues H215 and 264–265 (SF). H215 is a Fe cation binding site. Position 272 (H272) interacts with Fe cation. A helical transmembrane segment spans residues 274 to 288 (FLAAWPVVGIWFTAL). [CaMn4O5] cluster-binding residues include H332, E333, D342, and A344. Residues 345–353 (SVELDSIDG) constitute a propeptide that is removed on maturation.

The protein belongs to the reaction center PufL/M/PsbA/D family. In terms of assembly, PSII is composed of 1 copy each of membrane proteins PsbA, PsbB, PsbC, PsbD, PsbE, PsbF, PsbH, PsbI, PsbJ, PsbK, PsbL, PsbM, PsbT, PsbX, PsbY, PsbZ, Psb30/Ycf12, at least 3 peripheral proteins of the oxygen-evolving complex and a large number of cofactors. It forms dimeric complexes. The D1/D2 heterodimer binds P680, chlorophylls that are the primary electron donor of PSII, and subsequent electron acceptors. It shares a non-heme iron and each subunit binds pheophytin, quinone, additional chlorophylls, carotenoids and lipids. D1 provides most of the ligands for the Mn4-Ca-O5 cluster of the oxygen-evolving complex (OEC). There is also a Cl(-1) ion associated with D1 and D2, which is required for oxygen evolution. The PSII complex binds additional chlorophylls, carotenoids and specific lipids. serves as cofactor. Tyr-161 forms a radical intermediate that is referred to as redox-active TyrZ, YZ or Y-Z. In terms of processing, C-terminally processed by CTPA; processing is essential to allow assembly of the oxygen-evolving complex and thus photosynthetic growth.

It localises to the plastid. The protein localises to the chloroplast thylakoid membrane. It catalyses the reaction 2 a plastoquinone + 4 hnu + 2 H2O = 2 a plastoquinol + O2. Functionally, photosystem II (PSII) is a light-driven water:plastoquinone oxidoreductase that uses light energy to abstract electrons from H(2)O, generating O(2) and a proton gradient subsequently used for ATP formation. It consists of a core antenna complex that captures photons, and an electron transfer chain that converts photonic excitation into a charge separation. The D1/D2 (PsbA/PsbD) reaction center heterodimer binds P680, the primary electron donor of PSII as well as several subsequent electron acceptors. The protein is Photosystem II protein D1 of Gnetum parvifolium (Small-leaved jointfir).